Here is a 511-residue protein sequence, read N- to C-terminus: 2,3-bisphosphoglycerate-independent phosphoglycerate mutase (511 aa).

Mn(2+) is bound by residues D12 and S62. Catalysis depends on S62, which acts as the Phosphoserine intermediate. Substrate is bound by residues H123, 154–155 (RD), R181, R187, 252–255 (RPDR), and K335. Mn(2+) is bound by residues D402, H406, D444, H445, and H462.

Belongs to the BPG-independent phosphoglycerate mutase family. Monomer. Requires Mn(2+) as cofactor.

The catalysed reaction is (2R)-2-phosphoglycerate = (2R)-3-phosphoglycerate. It participates in carbohydrate degradation; glycolysis; pyruvate from D-glyceraldehyde 3-phosphate: step 3/5. Catalyzes the interconversion of 2-phosphoglycerate and 3-phosphoglycerate. In Acholeplasma laidlawii (strain PG-8A), this protein is 2,3-bisphosphoglycerate-independent phosphoglycerate mutase.